The primary structure comprises 595 residues: Neuroepithelial cell-transforming gene 1 protein (595 aa).

Residue Met1 is modified to N-acetylmethionine. Residues 1–42 (MEPEPAAQKQPRPRRRSRRVSMLSEEPAAGLPADTPGPAANE) are disordered. Residues 1–74 (MEPEPAAQKQ…LKRKRREKDD (74 aa)) are necessary for nuclear localization. A Nuclear localization signal motif is present at residues 12–19 (RPRRRSRR). Residue Ser21 is modified to Phosphoserine. Residues 66 to 72 (KRKRREK) carry the Nuclear localization signal motif. Residues Ser100, Ser106, and Ser122 each carry the phosphoserine modification. The tract at residues 127-151 (GDHRSPASAQKSFSRSTVPTPTKRR) is disordered. The span at 133 to 146 (ASAQKSFSRSTVPT) shows a compositional bias: polar residues. The region spanning 174–356 (KRQEAIYELS…QGVLSDINLK (183 aa)) is the DH domain. In terms of domain architecture, PH spans 386-501 (VLLCHGELKN…WFNCIRAAIA (116 aa)). The residue at position 508 (Ser508) is a Phosphoserine. Positions 555–595 (CGSSVQTVEDTRNMKAQRPQPGLRRARDKAQSGGKKKETLV) are disordered.

Interacts with RHOA in its GTP- and GDP-bound states, and with CDC42 in its GTP-bound state. Interacts with the PDZ 1 domain of BAIAP1.

Its subcellular location is the cytoplasm. The protein localises to the nucleus. In terms of biological role, acts as a guanine nucleotide exchange factor (GEF) for RhoA GTPase. May be involved in activation of the SAPK/JNK pathway. Stimulates genotoxic stress-induced RHOB activity in breast cancer cells leading to their cell death. The polypeptide is Neuroepithelial cell-transforming gene 1 protein (Net1) (Mus musculus (Mouse)).